Reading from the N-terminus, the 487-residue chain is Sodium-coupled neutral amino acid symporter 1 (487 aa).

Over 1–74 the chain is Cytoplasmic; the sequence is MMHFKSGLEL…EYIPGTTSLG (74 aa). At serine 6 the chain carries Phosphoserine. Position 11 is a phosphothreonine (threonine 11). Residues serine 25, serine 28, serine 49, and serine 52 each carry the phosphoserine modification. Threonine 54 bears the Phosphothreonine mark. Phosphoserine is present on serine 56. The helical transmembrane segment at 75–97 threads the bilayer; that stretch reads MSVFNLSNAIMGSGILGLAFALA. Topologically, residues 98-112 are extracellular; that stretch reads NTGILLFLVLLTSVT. The helical transmembrane segment at 113–133 threads the bilayer; it reads LLSIYSINLLLICSKETGCMV. The Cytoplasmic segment spans residues 134-147; it reads YEKLGEQVFGTTGK. A helical transmembrane segment spans residues 148–168; it reads FVIFGATSLQNTGAMLSYLFI. The Extracellular segment spans residues 169 to 188; it reads VKNELPSAIKFLMGKEETFS. The chain crosses the membrane as a helical span at residues 189-211; it reads AWYVDGRVLVVIVTFGIILPLCL. Over 212–216 the chain is Cytoplasmic; it reads LKNLG. The chain crosses the membrane as a helical span at residues 217–237; it reads YLGYTSGFSLSCMVFFLIVVI. The Extracellular portion of the chain corresponds to 238–275; that stretch reads YKKFQIPCIVPELNSTISANSTNADTCTPKYVTLNSKT. Residues cysteine 245 and cysteine 264 are joined by a disulfide bond. 2 N-linked (GlcNAc...) asparagine glycosylation sites follow: asparagine 251 and asparagine 257. Residues 276–296 traverse the membrane as a helical segment; sequence VYALPTIAFAFVCHPSVLPIY. At 297-312 the chain is on the cytoplasmic side; that stretch reads SELKDRSQKKMQMVSN. The chain crosses the membrane as a helical span at residues 313–333; it reads ISFFAMFVMYFLTAIFGYLTF. The Extracellular portion of the chain corresponds to 334 to 350; the sequence is YDNVQSDLLHKYQGKDD. A helical transmembrane segment spans residues 351-371; that stretch reads ILILTVRLAVIVAVILTVPVL. The Cytoplasmic segment spans residues 372-393; that stretch reads FFTVRSSLFELAKKTKFNLCRH. Residues 394–414 form a helical membrane-spanning segment; sequence TVVTCILLVVINLLVISIPSM. Residues 415 to 416 are Extracellular-facing; sequence KD. A helical membrane pass occupies residues 417 to 437; it reads IFGVVGVTSANMLIFILPSSL. The Cytoplasmic portion of the chain corresponds to 438 to 452; it reads YLKITDQDGDKGTQR. A helical membrane pass occupies residues 453–473; it reads IWAALFLGLGVLFSLVSIPLV. At 474-487 the chain is on the extracellular side; sequence IYDWACSSSSDEGH.

Belongs to the amino acid/polyamine transporter 2 family. N-glycosylation plays an important role in the L-glutamine transport.

Its subcellular location is the cell membrane. The catalysed reaction is L-glutamine(in) + Na(+)(in) = L-glutamine(out) + Na(+)(out). It catalyses the reaction L-alanine(in) + Na(+)(in) = L-alanine(out) + Na(+)(out). It carries out the reaction L-asparagine(in) + Na(+)(in) = L-asparagine(out) + Na(+)(out). The enzyme catalyses L-histidine(in) + Na(+)(in) = L-histidine(out) + Na(+)(out). The catalysed reaction is L-serine(in) + Na(+)(in) = L-serine(out) + Na(+)(out). It catalyses the reaction L-cysteine(in) + Na(+)(in) = L-cysteine(out) + Na(+)(out). It carries out the reaction L-methionine(in) + Na(+)(in) = L-methionine(out) + Na(+)(out). The enzyme catalyses glycine(in) + Na(+)(in) = glycine(out) + Na(+)(out). The catalysed reaction is L-threonine(in) + Na(+)(in) = L-threonine(out) + Na(+)(out). It catalyses the reaction L-proline(in) + Na(+)(in) = L-proline(out) + Na(+)(out). Inhibited by alpha-(methylamino)isobutyric acid (MeAIB). Inhibited by lithium, potassium, choline ions, N-methylglucamine. The pH dependence has an allosteric effect on the transport. Symporter that cotransports short-chain neutral amino acids and sodium ions from the extraccellular to the intracellular side of the cell membrane. The transport is elctrogenic, pH dependent and driven by the Na(+) electrochemical gradient. Participates in the astroglia-derived glutamine transport into GABAergic interneurons for neurotransmitter GABA de novo synthesis. May also contributes to amino acid transport in placental trophoblast. Regulates synaptic plasticity. This is Sodium-coupled neutral amino acid symporter 1 from Pongo abelii (Sumatran orangutan).